Consider the following 359-residue polypeptide: Heat-inducible transcription repressor HrcA (359 aa).

The protein belongs to the HrcA family.

Functionally, negative regulator of class I heat shock genes (grpE-dnaK-dnaJ and groELS operons). Prevents heat-shock induction of these operons. The sequence is that of Heat-inducible transcription repressor HrcA from Rhizobium meliloti (strain 1021) (Ensifer meliloti).